The chain runs to 575 residues: Mitochondrial 2-methylisocitrate lyase ICL2 (575 aa).

The active site involves C238.

This sequence belongs to the isocitrate lyase/PEP mutase superfamily. Isocitrate lyase family.

The protein resides in the mitochondrion matrix. The enzyme catalyses (2S,3R)-3-hydroxybutane-1,2,3-tricarboxylate = pyruvate + succinate. The protein operates within organic acid metabolism; propanoate degradation. In terms of biological role, catalyzes the formation of pyruvate and succinate from 2-methylisocitrate during the metabolism of endogenous propionyl-CoA. Does not act on isocitrate. In Saccharomyces cerevisiae (strain ATCC 204508 / S288c) (Baker's yeast), this protein is Mitochondrial 2-methylisocitrate lyase ICL2 (ICL2).